Consider the following 1451-residue polypeptide: Protein clueless (1451 aa).

2 disordered regions span residues 1–101 (MALE…EYAA) and 264–286 (KKTRPDSVDCTPPEYVTPGVSEP). A compositionally biased stretch (low complexity) spans 9–53 (NSNATATGDATATKASSKAKENNNTAGGKKNLNPIPSQQNSNQNL). Residues 66 to 75 (GKKKGKKNRN) show a composition bias toward basic residues. Serine 270 carries the phosphoserine modification. Residues 424–666 (RAEDAFSSKL…RTFPPDVNFL (243 aa)) enclose the Clu domain. Disordered stretches follow at residues 722 to 775 (AKKQ…ESKT), 961 to 1012 (AVSS…SSVS), and 1413 to 1451 (ANNNGEAEDADPKDVKEQAQAGTQLTNGEKAAATEATSS). A compositionally biased stretch (basic and acidic residues) spans 748–758 (GADKTDVKEEK). Residues 969 to 984 (KKRGNGGKHNKHKSSK) show a composition bias toward basic residues. The span at 989-1010 (QQQQQTTGNQNGSSSGTSNGSS) shows a compositional bias: low complexity.

Belongs to the CLU family.

The protein localises to the cytoplasm. MRNA-binding protein involved in proper cytoplasmic distribution of mitochondria. This is Protein clueless from Drosophila yakuba (Fruit fly).